A 168-amino-acid chain; its full sequence is Transcription antitermination protein NusB (168 aa).

It belongs to the NusB family.

Involved in transcription antitermination. Required for transcription of ribosomal RNA (rRNA) genes. Binds specifically to the boxA antiterminator sequence of the ribosomal RNA (rrn) operons. The protein is Transcription antitermination protein NusB of Brucella anthropi (strain ATCC 49188 / DSM 6882 / CCUG 24695 / JCM 21032 / LMG 3331 / NBRC 15819 / NCTC 12168 / Alc 37) (Ochrobactrum anthropi).